The following is a 343-amino-acid chain: MTLCIKNGFLAAALVLVGLLICSIQMIGAQSIGVCYGKHANNLPSDQDVINLYNANGIRKMRIYNPDTNVFNALRGSNIEIILDVPLQDLQSLTDPSRANGWVQDNIINHFPDVKFKYIAVGNEVSPGNNGQYAPFVAPAMQNVYNALAAAGLQDQIKVSTATYSGILANTYPPKDSIFRGEFNSFINPIIQFLVQHNLPLLANVYPYFGHIFNTADVPLSYALFTQQEANPAGYQNLFDALLDSMYFAVEKAGGQNVEIIVSESGWPSEGNSAATIENAQTYYENLINHVKSGAGTPKKPGKAIETYLFAMFDENNKEGDITEKHFGLFSPDQRAKYQLNFN.

The first 29 residues, 1-29 (MTLCIKNGFLAAALVLVGLLICSIQMIGA), serve as a signal peptide directing secretion. Gln30 is modified (pyrrolidone carboxylic acid). Glu124 functions as the Proton donor in the catalytic mechanism. The Nucleophile role is filled by Glu264.

It belongs to the glycosyl hydrolase 17 family.

It localises to the secreted. The protein localises to the extracellular space. The enzyme catalyses Hydrolysis of (1-&gt;3)-beta-D-glucosidic linkages in (1-&gt;3)-beta-D-glucans.. Functionally, implicated in the defense of plants against pathogens. The sequence is that of Glucan endo-1,3-beta-glucosidase, acidic isoform GI9 (PR2) from Nicotiana tabacum (Common tobacco).